A 354-amino-acid polypeptide reads, in one-letter code: Tribbles homolog 3 (354 aa).

The interaction with DDIT3/CHOP stretch occupies residues 1–127; the sequence is MRATPLAASA…QHVARPTEVL (127 aa). The interval 36–61 is disordered; sequence RDEPEPGPLPSLLPPSPPPASDLSPA. The segment covering 41–55 has biased composition (pro residues); that stretch reads PGPLPSLLPPSPPPA. One can recognise a Protein kinase domain in the interval 68 to 315; the sequence is LGPYILLERE…ALGILLHPWL (248 aa). Positions 320-333 are enriched in basic and acidic residues; sequence GRVSPPQSDRREMD. The tract at residues 320–354 is disordered; it reads GRVSPPQSDRREMDQVVPDGPQLEEAEEGEVGLYG. Residues 341–354 show a composition bias toward acidic residues; sequence QLEEAEEGEVGLYG.

This sequence belongs to the protein kinase superfamily. CAMK Ser/Thr protein kinase family. Tribbles subfamily. In terms of assembly, interacts with AKT1, AKT2, MAP2K1 and MAP2K7. Interacts with ATF4. Interacts with DDIT3/CHOP and inhibits its interaction with EP300/P300. Interacts with APOBEC3C. Interacts (via N-terminus) with APOBEC3A. Interacts with RELA. Highly expressed in liver. Not detected in heart, brain, spleen, lung, skeletal muscle, kidney or testis.

Its subcellular location is the nucleus. In terms of biological role, inactive protein kinase which acts as a regulator of the integrated stress response (ISR), a process for adaptation to various stress. Inhibits the transcriptional activity of DDIT3/CHOP and is involved in DDIT3/CHOP-dependent cell death during ER stress. May play a role in programmed neuronal cell death but does not appear to affect non-neuronal cells. Acts as a negative feedback regulator of the ATF4-dependent transcription during the ISR: while TRIB3 expression is promoted by ATF4, TRIB3 protein interacts with ATF4 and inhibits ATF4 transcription activity. Disrupts insulin signaling by binding directly to Akt kinases and blocking their activation. May bind directly to and mask the 'Thr-308' phosphorylation site in AKT1. Interacts with the NF-kappa-B transactivator p65 RELA and inhibits its phosphorylation and thus its transcriptional activation activity. Interacts with MAPK kinases and regulates activation of MAP kinases. Can inhibit APOBEC3A editing of nuclear DNA. The protein is Tribbles homolog 3 (Trib3) of Mus musculus (Mouse).